Consider the following 332-residue polypeptide: tRNA-dihydrouridine(20/20a) synthase (332 aa).

FMN contacts are provided by residues Pro-20–Met-22 and Gln-73. Cys-103 (proton donor) is an active-site residue. FMN contacts are provided by residues Lys-142, His-174, Asn-214–Gly-216, and Gly-236–Arg-237.

This sequence belongs to the Dus family. DusA subfamily. Requires FMN as cofactor.

The enzyme catalyses 5,6-dihydrouridine(20) in tRNA + NADP(+) = uridine(20) in tRNA + NADPH + H(+). The catalysed reaction is 5,6-dihydrouridine(20) in tRNA + NAD(+) = uridine(20) in tRNA + NADH + H(+). It carries out the reaction 5,6-dihydrouridine(20a) in tRNA + NADP(+) = uridine(20a) in tRNA + NADPH + H(+). It catalyses the reaction 5,6-dihydrouridine(20a) in tRNA + NAD(+) = uridine(20a) in tRNA + NADH + H(+). In terms of biological role, catalyzes the synthesis of 5,6-dihydrouridine (D), a modified base found in the D-loop of most tRNAs, via the reduction of the C5-C6 double bond in target uridines. Specifically modifies U20 and U20a in tRNAs. This is tRNA-dihydrouridine(20/20a) synthase from Pseudomonas aeruginosa (strain ATCC 15692 / DSM 22644 / CIP 104116 / JCM 14847 / LMG 12228 / 1C / PRS 101 / PAO1).